Here is a 196-residue protein sequence, read N- to C-terminus: MQNSPIPSPWQFIKENIPLLMVALVLALLLRFFVAEPRYIPSDSMLPTLEQGDRLVVEKVSYHFHPPQVGDIIVFHPPELLQVQGYDLGQAFIKRVIALPGQTVEVNNGIVYRDGQPLQEEYILEPPQYNLPAVRVPDGQVFVMGDNRNNSNDSHVWGFLPQQNIIGHALFRFFPASRWGQLGSFTFVPARTIINT.

Residues 1-16 (MQNSPIPSPWQFIKEN) lie on the Cytoplasmic side of the membrane. The helical transmembrane segment at 17–35 (IPLLMVALVLALLLRFFVA) threads the bilayer. Over 36–196 (EPRYIPSDSM…FVPARTIINT (161 aa)) the chain is Periplasmic. Residues Ser-44 and Lys-94 contribute to the active site.

It belongs to the peptidase S26 family.

The protein localises to the cell membrane. The catalysed reaction is Cleavage of hydrophobic, N-terminal signal or leader sequences from secreted and periplasmic proteins.. This chain is Probable signal peptidase I-1 (lepB1), found in Synechocystis sp. (strain ATCC 27184 / PCC 6803 / Kazusa).